The sequence spans 434 residues: Histidinol dehydrogenase (434 aa).

Residues Ser242, Gln264, and His267 each contribute to the substrate site. Gln264 and His267 together coordinate Zn(2+). Residues Glu332 and His333 each act as proton acceptor in the active site. Residues His333, Asp366, Glu420, and His425 each contribute to the substrate site. Residue Asp366 participates in Zn(2+) binding. Residue His425 coordinates Zn(2+).

This sequence belongs to the histidinol dehydrogenase family. Zn(2+) serves as cofactor.

The enzyme catalyses L-histidinol + 2 NAD(+) + H2O = L-histidine + 2 NADH + 3 H(+). Its pathway is amino-acid biosynthesis; L-histidine biosynthesis; L-histidine from 5-phospho-alpha-D-ribose 1-diphosphate: step 9/9. In terms of biological role, catalyzes the sequential NAD-dependent oxidations of L-histidinol to L-histidinaldehyde and then to L-histidine. The protein is Histidinol dehydrogenase of Desulfotalea psychrophila (strain LSv54 / DSM 12343).